Reading from the N-terminus, the 92-residue chain is Large ribosomal subunit protein uL24 (92 aa).

Belongs to the universal ribosomal protein uL24 family. Part of the 50S ribosomal subunit.

Its function is as follows. One of two assembly initiator proteins, it binds directly to the 5'-end of the 23S rRNA, where it nucleates assembly of the 50S subunit. Functionally, one of the proteins that surrounds the polypeptide exit tunnel on the outside of the subunit. The polypeptide is Large ribosomal subunit protein uL24 (Opitutus terrae (strain DSM 11246 / JCM 15787 / PB90-1)).